The chain runs to 282 residues: 1-deoxy-11-beta-hydroxypentalenate dehydrogenase (282 aa).

An NAD(+)-binding site is contributed by 12 to 36; the sequence is GAASGIGLALSARFARAGAGVVMAD. Ser144 is a binding site for substrate. Catalysis depends on Tyr157, which acts as the Proton acceptor. Lys161 is an NAD(+) binding site. The tract at residues 258-282 is disordered; that stretch reads PPPSPEEELWPVPKTTTATTATTKH. Residues 267 to 282 show a composition bias toward low complexity; that stretch reads WPVPKTTTATTATTKH.

This sequence belongs to the short-chain dehydrogenases/reductases (SDR) family.

It catalyses the reaction 1-deoxy-11beta-hydroxypentalenate + NAD(+) = 1-deoxy-11-oxopentalenate + NADH + H(+). It participates in antibiotic biosynthesis; pentalenolactone biosynthesis. In terms of biological role, catalyzes the oxidation of 1-deoxy-11-beta-hydroxypentalenic acid to 1-deoxy-11-oxopentalenic acid in the biosynthesis of pentalenolactone antibiotic. In Streptomyces arenae, this protein is 1-deoxy-11-beta-hydroxypentalenate dehydrogenase (pntF).